A 404-amino-acid chain; its full sequence is Cysteine desulfurase IscS (404 aa).

Pyridoxal 5'-phosphate contacts are provided by residues 75-76 (AT), N155, Q183, and 203-205 (SGH). The residue at position 206 (K206) is an N6-(pyridoxal phosphate)lysine. T243 is a pyridoxal 5'-phosphate binding site. C328 (cysteine persulfide intermediate) is an active-site residue. A [2Fe-2S] cluster-binding site is contributed by C328.

This sequence belongs to the class-V pyridoxal-phosphate-dependent aminotransferase family. NifS/IscS subfamily. In terms of assembly, homodimer. Forms a heterotetramer with IscU, interacts with other sulfur acceptors. Requires pyridoxal 5'-phosphate as cofactor.

The protein localises to the cytoplasm. It catalyses the reaction (sulfur carrier)-H + L-cysteine = (sulfur carrier)-SH + L-alanine. It functions in the pathway cofactor biosynthesis; iron-sulfur cluster biosynthesis. Master enzyme that delivers sulfur to a number of partners involved in Fe-S cluster assembly, tRNA modification or cofactor biosynthesis. Catalyzes the removal of elemental sulfur and selenium atoms from cysteine and selenocysteine to produce alanine. Functions as a sulfur delivery protein for Fe-S cluster synthesis onto IscU, an Fe-S scaffold assembly protein, as well as other S acceptor proteins. Also functions as a selenium delivery protein in the pathway for the biosynthesis of selenophosphate. This Salmonella schwarzengrund (strain CVM19633) protein is Cysteine desulfurase IscS.